Reading from the N-terminus, the 149-residue chain is Transcriptional regulator MraZ (149 aa).

2 SpoVT-AbrB domains span residues 7–54 (KYVN…GISH) and 83–126 (AVQL…QPQN).

The protein belongs to the MraZ family. In terms of assembly, forms oligomers.

The protein resides in the cytoplasm. It localises to the nucleoid. The sequence is that of Transcriptional regulator MraZ from Rickettsia conorii (strain ATCC VR-613 / Malish 7).